Consider the following 87-residue polypeptide: Small ribosomal subunit protein uS17 (87 aa).

The protein belongs to the universal ribosomal protein uS17 family. In terms of assembly, part of the 30S ribosomal subunit.

One of the primary rRNA binding proteins, it binds specifically to the 5'-end of 16S ribosomal RNA. This chain is Small ribosomal subunit protein uS17, found in Bacillus licheniformis (strain ATCC 14580 / DSM 13 / JCM 2505 / CCUG 7422 / NBRC 12200 / NCIMB 9375 / NCTC 10341 / NRRL NRS-1264 / Gibson 46).